The following is a 337-amino-acid chain: Phosphatidate cytidylyltransferase, mitochondrial (337 aa).

It belongs to the TAM41 family. Mg(2+) is required as a cofactor.

The protein resides in the mitochondrion inner membrane. It carries out the reaction a 1,2-diacyl-sn-glycero-3-phosphate + CTP + H(+) = a CDP-1,2-diacyl-sn-glycerol + diphosphate. Its pathway is phospholipid metabolism; CDP-diacylglycerol biosynthesis; CDP-diacylglycerol from sn-glycerol 3-phosphate: step 3/3. Catalyzes the conversion of phosphatidic acid (PA) to CDP-diacylglycerol (CDP-DAG), an essential intermediate in the synthesis of phosphatidylglycerol, cardiolipin and phosphatidylinositol. The sequence is that of Phosphatidate cytidylyltransferase, mitochondrial (Tamm41) from Mus musculus (Mouse).